The chain runs to 106 residues: uncharacterized protein (106 aa).

A helical transmembrane segment spans residues 9–27 (ALAALAFTLGLIGLAAWAL). Residues 84–106 (TPKGPPPASALSPSPVAEPEPVV) are disordered.

The protein belongs to the FliO/MopB family.

The protein localises to the cell membrane. It localises to the bacterial flagellum basal body. This is an uncharacterized protein from Caulobacter vibrioides (strain ATCC 19089 / CIP 103742 / CB 15) (Caulobacter crescentus).